A 564-amino-acid polypeptide reads, in one-letter code: Septation ring formation regulator EzrA (564 aa).

The Extracellular portion of the chain corresponds to 1-4 (MVLF). The chain crosses the membrane as a helical span at residues 5-23 (IILAILVVILIAIGVLFYM). Residues 24–564 (RSNKRNLIEK…KHIEEQVIKE (541 aa)) lie on the Cytoplasmic side of the membrane. Coiled coils occupy residues 84 to 126 (VEEK…HQVT), 165 to 223 (EAAE…LIRE), 271 to 303 (MISR…YEVK), and 350 to 435 (VRQF…RRLL).

The protein belongs to the EzrA family.

It is found in the cell membrane. In terms of biological role, negative regulator of FtsZ ring formation; modulates the frequency and position of FtsZ ring formation. Inhibits FtsZ ring formation at polar sites. Interacts either with FtsZ or with one of its binding partners to promote depolymerization. The sequence is that of Septation ring formation regulator EzrA from Staphylococcus epidermidis (strain ATCC 12228 / FDA PCI 1200).